A 238-amino-acid polypeptide reads, in one-letter code: Probable xyloglucan-specific endo-beta-1,4-glucanase A (238 aa).

Positions 1 to 18 (MKLSLSVALSLAASTAQA) are cleaved as a signal peptide. Residues N106 and N171 are each glycosylated (N-linked (GlcNAc...) asparagine).

It belongs to the glycosyl hydrolase 12 (cellulase H) family.

It localises to the secreted. The catalysed reaction is xyloglucan + H2O = xyloglucan oligosaccharides.. In terms of biological role, catalyzes endohydrolysis of 1,4-beta-D-glucosidic linkages in xyloglucan with retention of the beta-configuration of the glycosyl residues. Specific for xyloglucan and does not hydrolyze other cell wall components. The chain is Probable xyloglucan-specific endo-beta-1,4-glucanase A (xgeA) from Aspergillus fumigatus (strain ATCC MYA-4609 / CBS 101355 / FGSC A1100 / Af293) (Neosartorya fumigata).